The following is a 1414-amino-acid chain: DNA-directed RNA polymerase subunit beta' (1414 aa).

Zn(2+) contacts are provided by Cys-70, Cys-72, Cys-85, and Cys-88. Asp-460, Asp-462, and Asp-464 together coordinate Mg(2+). Cys-815, Cys-889, Cys-896, and Cys-899 together coordinate Zn(2+). Residues 1395-1414 (EAEAQFADVSSTPDSDTDAS) are disordered.

It belongs to the RNA polymerase beta' chain family. In terms of assembly, the RNAP catalytic core consists of 2 alpha, 1 beta, 1 beta' and 1 omega subunit. When a sigma factor is associated with the core the holoenzyme is formed, which can initiate transcription. Mg(2+) is required as a cofactor. The cofactor is Zn(2+).

It catalyses the reaction RNA(n) + a ribonucleoside 5'-triphosphate = RNA(n+1) + diphosphate. DNA-dependent RNA polymerase catalyzes the transcription of DNA into RNA using the four ribonucleoside triphosphates as substrates. The chain is DNA-directed RNA polymerase subunit beta' from Janthinobacterium sp. (strain Marseille) (Minibacterium massiliensis).